We begin with the raw amino-acid sequence, 407 residues long: Subtilisin-like protease CPC735_013710 (407 aa).

Residues 1–17 (MQLLNLSLFFLLPFATA) form the signal peptide. The propeptide occupies 18-115 (NPIPQDSQNI…VLPDQKIYLA (98 aa)). The Inhibitor I9 domain occupies 31-114 (QYIVTLKDGL…SVLPDQKIYL (84 aa)). The 284-residue stretch at 124–407 (GWNLGYMSSK…VAYNGIQEML (284 aa)) folds into the Peptidase S8 domain. Residue Asn-145 is glycosylated (N-linked (GlcNAc...) asparagine). Active-site charge relay system residues include Asp-162 and His-194. N-linked (GlcNAc...) asparagine glycans are attached at residues Asn-241, Asn-254, and Asn-341. The active-site Charge relay system is Ser-350. N-linked (GlcNAc...) asparagine glycosylation is present at Asn-381.

This sequence belongs to the peptidase S8 family.

It is found in the secreted. Secreted subtilisin-like serine protease with keratinolytic activity that contributes to pathogenicity. This Coccidioides posadasii (strain C735) (Valley fever fungus) protein is Subtilisin-like protease CPC735_013710.